The primary structure comprises 225 residues: ATP-dependent dethiobiotin synthetase BioD 1 (225 aa).

Residues E13 and T17 each coordinate Mg(2+). Residue E13–V18 participates in ATP binding. K38 is a catalytic residue. S42 lines the substrate pocket. 2 residues coordinate Mg(2+): D55 and E116. Residues D55, E116–G119, and N176–D177 each bind ATP. Y188 serves as a coordination point for substrate. Residues P205–L207 and E212 contribute to the ATP site.

This sequence belongs to the dethiobiotin synthetase family. Homodimer. Mg(2+) is required as a cofactor.

The protein localises to the cytoplasm. It carries out the reaction (7R,8S)-7,8-diammoniononanoate + CO2 + ATP = (4R,5S)-dethiobiotin + ADP + phosphate + 3 H(+). It participates in cofactor biosynthesis; biotin biosynthesis; biotin from 7,8-diaminononanoate: step 1/2. Functionally, catalyzes a mechanistically unusual reaction, the ATP-dependent insertion of CO2 between the N7 and N8 nitrogen atoms of 7,8-diaminopelargonic acid (DAPA, also called 7,8-diammoniononanoate) to form a ureido ring. Only CTP can partially replace ATP while diaminobiotin is only 37% as effective as 7,8-diaminopelargonic acid. In another study both CTP and GTP (but not ITP, TTP or UTP) can partially replace ATP. The polypeptide is ATP-dependent dethiobiotin synthetase BioD 1 (Escherichia coli (strain K12)).